The primary structure comprises 308 residues: Oxygen-dependent coproporphyrinogen-III oxidase (308 aa).

Residue Ser100 participates in substrate binding. 2 residues coordinate a divalent metal cation: His104 and His114. The Proton donor role is filled by His114. 116 to 118 (NFR) lines the substrate pocket. A divalent metal cation is bound by residues His153 and His183. An important for dimerization region spans residues 248 to 283 (YVEFNLVFDRGTIFGLQSGGRTESILSSMPPMATWK). 266 to 268 (GGR) is a substrate binding site.

The protein belongs to the aerobic coproporphyrinogen-III oxidase family. In terms of assembly, homodimer. It depends on a divalent metal cation as a cofactor.

It is found in the cytoplasm. The enzyme catalyses coproporphyrinogen III + O2 + 2 H(+) = protoporphyrinogen IX + 2 CO2 + 2 H2O. The protein operates within porphyrin-containing compound metabolism; protoporphyrin-IX biosynthesis; protoporphyrinogen-IX from coproporphyrinogen-III (O2 route): step 1/1. Involved in the heme biosynthesis. Catalyzes the aerobic oxidative decarboxylation of propionate groups of rings A and B of coproporphyrinogen-III to yield the vinyl groups in protoporphyrinogen-IX. This is Oxygen-dependent coproporphyrinogen-III oxidase from Francisella tularensis subsp. holarctica (strain FTNF002-00 / FTA).